The sequence spans 288 residues: Capsid protein (288 aa).

N-acetylalanine; by host is present on A2.

It belongs to the high plain virus capsid family.

The protein localises to the virion. This chain is Capsid protein, found in High plains virus (isolate Kansas 2004).